The sequence spans 144 residues: Eukaryotic translation initiation factor 1A (144 aa).

Basic residues predominate over residues 1–15; that stretch reads MPKNKGKGGKNRRRG. Disordered stretches follow at residues 1 to 26 and 114 to 144; these read MPKNKGKGGKNRRRGKNENESEKREL and KINETDTFGPGDDDEIQFDDIGDDDEDIDDI. A compositionally biased stretch (basic and acidic residues) spans 16-26; the sequence is KNENESEKREL. The S1-like domain occupies 22-96; sequence EKRELVFKED…NKADVILKYN (75 aa). A compositionally biased stretch (acidic residues) spans 124 to 144; sequence GDDDEIQFDDIGDDDEDIDDI.

The protein belongs to the eIF-1A family. As to quaternary structure, component of the 43S pre-initiation complex (43S PIC), which is composed of the 40S ribosomal subunit, EIF1, eIF1A (EIF1AX), eIF3 complex, EIF5 and eIF2-GTP-initiator tRNA complex (eIF2 ternary complex). Interacts with EIF5; this interaction contributes to the maintenance of EIF1 within the open 43S PIC. Interacts through its C-terminal domain (CTD) with the CTD of EIF5B; from the location of the start codon by the 43S complex until the formation of the 80S complex.

Its subcellular location is the cytoplasm. In terms of biological role, component of the 43S pre-initiation complex (43S PIC), which binds to the mRNA cap-proximal region, scans mRNA 5'-untranslated region, and locates the initiation codon. This protein enhances formation of the cap-proximal complex. Together with EIF1, facilitates scanning, start codon recognition, promotion of the assembly of 48S complex at the initiation codon (43S PIC becomes 48S PIC after the start codon is reached), and dissociation of aberrant complexes. After start codon location, together with EIF5B orients the initiator methionine-tRNA in a conformation that allows 60S ribosomal subunit joining to form the 80S initiation complex. Is released after 80S initiation complex formation, just after GTP hydrolysis by EIF5B, and before release of EIF5B. Its globular part is located in the A site of the 40S ribosomal subunit. Its interaction with EIF5 during scanning contribute to the maintenance of EIF1 within the open 43S PIC. In contrast to yeast orthologs, does not bind EIF1. In Mus musculus (Mouse), this protein is Eukaryotic translation initiation factor 1A (Eif1a).